A 106-amino-acid chain; its full sequence is Thioredoxin (106 aa).

One can recognise a Thioredoxin domain in the interval 2–106 (VNFLKTKADF…GLREKIKKNK (105 aa)). Active-site nucleophile residues include Cys-32 and Cys-35. Residues Cys-32 and Cys-35 are joined by a disulfide bond.

Belongs to the thioredoxin family.

It localises to the cytoplasm. In terms of biological role, participates in various redox reactions through the reversible oxidation of its active center dithiol to a disulfide and catalyzes dithiol-disulfide exchange reactions. The sequence is that of Thioredoxin (THIO) from Geodia cydonium (Sponge).